A 365-amino-acid chain; its full sequence is NADH-quinone oxidoreductase subunit H (365 aa).

The next 8 membrane-spanning stretches (helical) occupy residues 27–47 (LLLILAIIIPLLLAVAYLTFA), 99–119 (FLFLLAPILAITPALAAWAVV), 133–153 (ALLYILAMTSLGVYGVIIAGW), 168–188 (AAQVISYELAMGFALVCVLMM), 206–226 (FLNWYMIPLFPMFLVYFISGV), 268–288 (ILVATLASIMFLGGWLPPVDI), 294–314 (IPGVVWLLLKIAIMLFFFLWF), and 329–349 (LGWKVFIPITLIWIVLLGAVM).

This sequence belongs to the complex I subunit 1 family. NDH-1 is composed of 14 different subunits. Subunits NuoA, H, J, K, L, M, N constitute the membrane sector of the complex.

Its subcellular location is the cell inner membrane. The catalysed reaction is a quinone + NADH + 5 H(+)(in) = a quinol + NAD(+) + 4 H(+)(out). In terms of biological role, NDH-1 shuttles electrons from NADH, via FMN and iron-sulfur (Fe-S) centers, to quinones in the respiratory chain. The immediate electron acceptor for the enzyme in this species is believed to be ubiquinone. Couples the redox reaction to proton translocation (for every two electrons transferred, four hydrogen ions are translocated across the cytoplasmic membrane), and thus conserves the redox energy in a proton gradient. This subunit may bind ubiquinone. This is NADH-quinone oxidoreductase subunit H from Nitrosomonas eutropha (strain DSM 101675 / C91 / Nm57).